Reading from the N-terminus, the 138-residue chain is Transcription factor Atoh7-a (138 aa).

The bHLH domain maps to 33–85 (KRRLAANARERRRMQGLNTAFDSLRKVVPQWGEDKQLSKYETLQMALSYIMAL).

It localises to the nucleus. Its subcellular location is the perikaryon. It is found in the cell projection. The protein localises to the axon. Functionally, transcription factor that binds to DNA at the consensus sequence 5'-CAG[GC]TG-3'. Positively regulates the determination of retinal ganglion cell fate and formation of the optic nerve and retino-hypothalamic tract. Required for retinal circadian rhythm photoentrainment. Plays a role in brainstem auditory signaling and binaural processing. Regulates the differentiation of olfactory receptor neurons. During retinal neurogenesis, activates the transcription of several genes such as brn3d, coe3, cbfa2t2, glis2, elrC and xgadd45-gamma. The chain is Transcription factor Atoh7-a from Xenopus laevis (African clawed frog).